The following is a 232-amino-acid chain: U2 small nuclear ribonucleoprotein B'' (232 aa).

Residues Q10–A89 enclose the RRM 1 domain. The interval T100–N157 is disordered. Over residues R108–Q122 the composition is skewed to basic and acidic residues. 2 stretches are compositionally biased toward polar residues: residues R123 to N139 and F146 to P156. Positions N158–K232 constitute an RRM 2 domain.

The protein belongs to the RRM U1 A/B'' family. As to quaternary structure, component of the spliceosome where it is associated with snRNP U2.

It is found in the nucleus. It localises to the cajal body. The protein resides in the nucleoplasm. The protein localises to the cytoplasm. Its function is as follows. Involved in nuclear pre-mRNA splicing. The protein is U2 small nuclear ribonucleoprotein B'' (U2B'') of Arabidopsis thaliana (Mouse-ear cress).